The following is a 245-amino-acid chain: Thymidylate kinase (245 aa).

55–62 (GIDGVGKS) serves as a coordination point for ATP.

It belongs to the thymidylate kinase family.

It carries out the reaction dTMP + ATP = dTDP + ADP. Functionally, phosphorylation of dTMP to form dTDP in both de novo and salvage pathways of dTTP synthesis. This Rhodopirellula baltica (strain DSM 10527 / NCIMB 13988 / SH1) protein is Thymidylate kinase.